The primary structure comprises 406 residues: MRSWFPHAPTVSVPEIEPEEALSYRDEIRTRVRSYAFGLDDWRAKVKTRRAYLRKVRDEDESEILRVYGALLTVAAAGPRPVRHLIAEGESAMAETALYALRHEDESAMSYPEERVLSDLYLWDVRVLERDLGLYAVHFSFPLIHRSPEGQKLKVLVWERASLEKVLKEVRSNRVLGVRVLDPSGWNDVWICPRCGATRRGGTGDLEQDHARRCSNCRGRMRKPDPNLLEMLKEPEGYLIMHFKTLARTFREDVRRLVVSDIESRDDVEDEELREFCLKLFPKVRKRLERVEKGAGGRFPPCIRELLRRAQEGENLPHEARFALAAFLVNVGWDVDRVVEVFSNLPDFDEERTQYQVRHIAGEVGGGTRYLPPNCDKMKAWGLCPGKDCGVKNPLAYYRRPRADDG.

Positions 302, 375, 384, and 389 each coordinate [4Fe-4S] cluster.

This sequence belongs to the eukaryotic-type primase large subunit family. In terms of assembly, heterodimer of a small subunit (PriS) and a large subunit (PriL). It depends on [4Fe-4S] cluster as a cofactor.

Regulatory subunit of DNA primase, an RNA polymerase that catalyzes the synthesis of short RNA molecules used as primers for DNA polymerase during DNA replication. Stabilizes and modulates the activity of the small subunit, increasing the rate of DNA synthesis, and conferring RNA synthesis capability. The DNA polymerase activity may enable DNA primase to also catalyze primer extension after primer synthesis. May also play a role in DNA repair. The chain is DNA primase large subunit PriL from Methanopyrus kandleri (strain AV19 / DSM 6324 / JCM 9639 / NBRC 100938).